Consider the following 156-residue polypeptide: S-ribosylhomocysteine lyase (156 aa).

Positions 53, 57, and 122 each coordinate Fe cation.

Belongs to the LuxS family. As to quaternary structure, homodimer. The cofactor is Fe cation.

It catalyses the reaction S-(5-deoxy-D-ribos-5-yl)-L-homocysteine = (S)-4,5-dihydroxypentane-2,3-dione + L-homocysteine. Involved in the synthesis of autoinducer 2 (AI-2) which is secreted by bacteria and is used to communicate both the cell density and the metabolic potential of the environment. The regulation of gene expression in response to changes in cell density is called quorum sensing. Catalyzes the transformation of S-ribosylhomocysteine (RHC) to homocysteine (HC) and 4,5-dihydroxy-2,3-pentadione (DPD). This chain is S-ribosylhomocysteine lyase, found in Finegoldia magna (strain ATCC 29328 / DSM 20472 / WAL 2508) (Peptostreptococcus magnus).